The sequence spans 324 residues: Polyketide biosynthesis acyltransferase homolog BaeD (324 aa).

Residue S99 is part of the active site.

Its subcellular location is the cytoplasm. Its pathway is antibiotic biosynthesis; bacillaene biosynthesis. Functionally, probably involved in some intermediate steps for the synthesis of the antibiotic polyketide bacillaene which is involved in secondary metabolism. The sequence is that of Polyketide biosynthesis acyltransferase homolog BaeD (baeD) from Bacillus velezensis (strain DSM 23117 / BGSC 10A6 / LMG 26770 / FZB42) (Bacillus amyloliquefaciens subsp. plantarum).